An 828-amino-acid polypeptide reads, in one-letter code: Periplasmic nitrate reductase (828 aa).

The segment at residues 1 to 31 (MKLSRRSFMKANAVAAAAAAAGLSVPGVARA) is a signal peptide (tat-type signal). One can recognise a 4Fe-4S Mo/W bis-MGD-type domain in the interval 39-95 (IKWDKAPCRFCGTGCGVLVGTQQGRVVACQGDPDAPVNRGLNCIKGYFLPKIMYGKD). [4Fe-4S] cluster contacts are provided by C46, C49, C53, and C81. Residues K83, Q150, N175, C179, 212-219 (WGSNMAEM), 243-247 (STFQH), 262-264 (QSD), M372, Q376, N482, 508-509 (SD), K531, D558, and 718-727 (TGRVLEHWHT) contribute to the Mo-bis(molybdopterin guanine dinucleotide) site. Substrate is bound at residue F794. Positions 802 and 819 each coordinate Mo-bis(molybdopterin guanine dinucleotide).

This sequence belongs to the prokaryotic molybdopterin-containing oxidoreductase family. NasA/NapA/NarB subfamily. As to quaternary structure, component of the periplasmic nitrate reductase NapAB complex composed of NapA and NapB. [4Fe-4S] cluster serves as cofactor. Requires Mo-bis(molybdopterin guanine dinucleotide) as cofactor. Predicted to be exported by the Tat system. The position of the signal peptide cleavage has not been experimentally proven.

It localises to the periplasm. The enzyme catalyses 2 Fe(II)-[cytochrome] + nitrate + 2 H(+) = 2 Fe(III)-[cytochrome] + nitrite + H2O. Its function is as follows. Catalytic subunit of the periplasmic nitrate reductase complex NapAB. Receives electrons from NapB and catalyzes the reduction of nitrate to nitrite. In Salmonella schwarzengrund (strain CVM19633), this protein is Periplasmic nitrate reductase.